We begin with the raw amino-acid sequence, 695 residues long: ATP-dependent permease MDL1, mitochondrial (695 aa).

A mitochondrion-targeting transit peptide spans 1 to 100 (MIVRMIRLCK…RLFVLSKPES (100 aa)). Transmembrane regions (helical) follow at residues 103–123 (IGLA…VPSV), 156–176 (FTAL…RIII), 242–262 (FVGF…MMIL), 337–357 (GLFF…LLLV), and 372–392 (LSSF…LSSF). In terms of domain architecture, ABC transmembrane type-1 spans 103–398 (IGLALLLILI…LSSFYSELMK (296 aa)). An ABC transporter domain is found at 432 to 673 (IVFKNVSFTY…PNSELNALLA (242 aa)). 467-474 (GPSGSGKS) is a binding site for ATP.

The protein belongs to the ABC transporter superfamily. ABCB family. Mitochondrial peptide exporter (TC 3.A.1.212) subfamily.

The protein resides in the mitochondrion inner membrane. Its function is as follows. Mediates export of peptides with molecular masses of 2100 to 600 daltons generated upon proteolysis of mitochondrial inner membrane proteins. The protein is ATP-dependent permease MDL1, mitochondrial (MDL1) of Saccharomyces cerevisiae (strain ATCC 204508 / S288c) (Baker's yeast).